The following is a 242-amino-acid chain: uncharacterized protein (242 aa).

S-adenosyl-L-methionine contacts are provided by G198, I218, and L227.

The protein belongs to the class IV-like SAM-binding methyltransferase superfamily. RNA methyltransferase TrmH family.

This is an uncharacterized protein from Mycoplasma pneumoniae (strain ATCC 29342 / M129 / Subtype 1) (Mycoplasmoides pneumoniae).